Here is a 296-residue protein sequence, read N- to C-terminus: Antisense-enhancing sequence 1 (296 aa).

E47 is a catalytic residue.

Belongs to the PhzF family.

Its function is as follows. May have isomerase activity. Enhances target gene silencing when coexpressed with antisense RNA. The sequence is that of Antisense-enhancing sequence 1 (aes1) from Schizosaccharomyces pombe (strain 972 / ATCC 24843) (Fission yeast).